A 706-amino-acid polypeptide reads, in one-letter code: Glutamine-dependent NAD(+) synthetase (706 aa).

In terms of domain architecture, CN hydrolase spans 5–275 (VTVATCALNQ…VEVLTATLDL (271 aa)). Glu45 (proton acceptor; for glutaminase activity) is an active-site residue. Lys114 (for glutaminase activity) is an active-site residue. Cys175 functions as the Nucleophile; for glutaminase activity in the catalytic mechanism. The tract at residues 325 to 706 (YHSPEEEISL…AAPQSLDGVD (382 aa)) is ligase. An ATP-binding site is contributed by 355–362 (PLSGGVDS). Residue Ser357 is part of the active site.

This sequence in the C-terminal section; belongs to the NAD synthetase family. As to quaternary structure, homohexamer.

It carries out the reaction deamido-NAD(+) + L-glutamine + ATP + H2O = L-glutamate + AMP + diphosphate + NAD(+) + H(+). The protein operates within cofactor biosynthesis; NAD(+) biosynthesis; NAD(+) from deamido-NAD(+) (L-Gln route): step 1/1. In terms of biological role, catalyzes the final step of the nicotinamide adenine dinucleotide (NAD) de novo synthesis pathway, the ATP-dependent amidation of deamido-NAD using L-glutamine as a nitrogen source. The sequence is that of Glutamine-dependent NAD(+) synthetase (NADSYN1) from Macaca fascicularis (Crab-eating macaque).